The primary structure comprises 1172 residues: Short transient receptor potential channel 2 (1172 aa).

Basic and acidic residues predominate over residues 1-10 (MLMSRTDSKS). 4 disordered regions span residues 1–22 (MLMSRTDSKSGKNRSGVRMFKD), 69–98 (VVDPSAPGSSGLNQNSTDVLESDPRPWLTN), 140–227 (SAAR…GGVQ), and 249–271 (ATCGESPPPQPASPASLSSSESV). Residues 1-659 (MLMSRTDSKS…PKSQLGRLLK (659 aa)) are Cytoplasmic-facing. Over residues 75 to 87 (PGSSGLNQNSTDV) the composition is skewed to polar residues. The span at 166–177 (ESAEPRAEEPNR) shows a compositional bias: basic and acidic residues. A compositionally biased stretch (polar residues) spans 195–204 (SLSNSSSQPN). Residues 206–218 (RTGRTRQRQHRPQ) show a composition bias toward basic residues. A compositionally biased stretch (low complexity) spans 261–270 (SPASLSSSES). 3 ANK repeats span residues 301–330 (KFPPTLLRAIQEGQLGLVQQLLESSSDASG), 377–406 (QIHEALLVAVDTNQPAVVRRLLARLEREKG), and 430–459 (PGVTPLTLACQKDLYEIAQLLMDQGHTIAR). Residues 660–680 (IPVLKFLLHSASYLWFLIFLL) traverse the membrane as a helical segment. The Extracellular segment spans residues 681–702 (GESLVMETQLSTFKGRSQSVWE). The helical transmembrane segment at 703–723 (TSLHMIWVTGFLWFECKEVWI) threads the bilayer. The Cytoplasmic portion of the chain corresponds to 724–738 (EGLRSYLLDWWNFLD). Residues 739-759 (VVILSLYLASFALRLLLAGLA) traverse the membrane as a helical segment. The Extracellular segment spans residues 760 to 789 (YMHCRDASDSTTCRYFTTAERSEWRTEDPQ). Residues 790-810 (FLAEVLFAVTSMLSFTRLAYI) form a helical membrane-spanning segment. Topologically, residues 811-833 (LPAHESLGTLQISIGKMIDDMIR) are cytoplasmic. Residues 834 to 854 (FMFILMIILTAFLCGLNNIYV) form a helical membrane-spanning segment. The Extracellular portion of the chain corresponds to 855 to 899 (PYQESEKLGNFNETFQFLFWTMFGMEEHTVVDMPQFLVPEFVGRA). Residues 900-920 (MYGIFTIVMVIVLLNMLIAMI) form a helical membrane-spanning segment. Residues 921-1172 (TNSFQKIEDD…EGDLETKGES (252 aa)) are Cytoplasmic-facing. The segment at 1118–1172 (VSLGDGLDGTGEAGAPAPGEPGSSSSAHVLVHREQEAEGSGDLLLEGDLETKGES) is disordered. Low complexity predominate over residues 1130 to 1144 (AGAPAPGEPGSSSSA).

This sequence belongs to the transient receptor (TC 1.A.4) family. STrpC subfamily. TRPC2 sub-subfamily. As to expression, isoform 3 is ubiquitously expressed at low levels. Isoform 4 is expressed exclusively in vomeronasal organ.

Its subcellular location is the membrane. In terms of biological role, thought to form a receptor-activated non-selective calcium permeant cation channel. Probably is operated by a phosphatidylinositol second messenger system activated by receptor tyrosine kinases or G-protein coupled receptors. May also be activated by intracellular calcium store depletion. Plays a role in mediating responsivity to pheromones that elicit aggressive and mating behaviors. Required for response to the Esp1 pheromone which enhances female sexual receptive behavior and to the Esp22 pheromone which inhibits adult male mating behavior. The polypeptide is Short transient receptor potential channel 2 (Trpc2) (Mus musculus (Mouse)).